A 110-amino-acid polypeptide reads, in one-letter code: Large ribosomal subunit protein uL22 (110 aa).

Positions 84 to 95 (ARGTASKIRKPT) are enriched in basic residues. The interval 84 to 110 (ARGTASKIRKPTSHVMVEVSKPEKKEA) is disordered.

This sequence belongs to the universal ribosomal protein uL22 family. In terms of assembly, part of the 50S ribosomal subunit.

This protein binds specifically to 23S rRNA; its binding is stimulated by other ribosomal proteins, e.g. L4, L17, and L20. It is important during the early stages of 50S assembly. It makes multiple contacts with different domains of the 23S rRNA in the assembled 50S subunit and ribosome. Its function is as follows. The globular domain of the protein is located near the polypeptide exit tunnel on the outside of the subunit, while an extended beta-hairpin is found that lines the wall of the exit tunnel in the center of the 70S ribosome. In Campylobacter concisus (strain 13826), this protein is Large ribosomal subunit protein uL22.